Consider the following 120-residue polypeptide: T-cell receptor beta chain V region PHDS203 (120 aa).

An N-terminal signal peptide occupies residues 1-11 (VVLCFLGTGLV). The interval 12-106 (DMKVTQMSRY…TSVYFCAQGA (95 aa)) is v segment. A disulfide bond links C34 and C102. The j segment stretch occupies residues 107–120 (PEQYFGPGTRLTVL).

In Mus musculus (Mouse), this protein is T-cell receptor beta chain V region PHDS203.